A 640-amino-acid polypeptide reads, in one-letter code: Sodium-dependent nutrient amino acid transporter 1 (640 aa).

Low complexity predominate over residues 1 to 13 (MELKPNGNHNNNN). Residues 1-25 (MELKPNGNHNNNNAAEKSEDTEKAK) form a disordered region. Topologically, residues 1–30 (MELKPNGNHNNNNAAEKSEDTEKAKAERTN) are cytoplasmic. Residues 16–25 (EKSEDTEKAK) are compositionally biased toward basic and acidic residues. 3 consecutive transmembrane segments (helical) span residues 31 to 51 (WGNGLEFLMSCISVSVGLGNV), 64 to 84 (GAFLIPYIIVLFLIGKPMYYL), and 117 to 137 (TICIISYYSSLLALTLYYLFV). Asn-174, Asn-181, and Asn-197 each carry an N-linked (GlcNAc...) asparagine glycan. The next 9 membrane-spanning stretches (helical) occupy residues 228–248 (PDWKLTLALLASWVVIFLVIM), 257–277 (AAYFLALFPYVVLFVLLIRAV), 306–326 (AVVQCFFSLAVGSGPIIMFAS), 340–360 (IVTTLDTLTSLLGGITIFAIL), 400–420 (LFSVLFFFMLFVLGIGSIVAL), 447–467 (CGFLMGLVYVTPGGQWILTLV), 473–493 (TYVVFILAIFELAGIVWIYGL), 515–535 (CWSFFTPVMMIIIFIYSMVTI), and 551–571 (VAGWLLFGIGAAQFPLWGLWY).

It belongs to the sodium:neurotransmitter symporter (SNF) (TC 2.A.22) family.

Its subcellular location is the membrane. In terms of biological role, unusual broad substrate spectrum amino acid:sodium cotransporter that promotes absorption of the D isomers of essential amino acids. Neutral amino acids are the preferred substrates, especially methionine and phenylalanine. The chain is Sodium-dependent nutrient amino acid transporter 1 from Drosophila ananassae (Fruit fly).